The chain runs to 323 residues: tRNA U34 carboxymethyltransferase (323 aa).

Residues Lys-91, Trp-105, Lys-110, Gly-130, 152–154, 181–182, Met-196, Tyr-200, and Arg-315 each bind carboxy-S-adenosyl-L-methionine; these read DPT and IE.

This sequence belongs to the class I-like SAM-binding methyltransferase superfamily. CmoB family. Homotetramer.

It carries out the reaction carboxy-S-adenosyl-L-methionine + 5-hydroxyuridine(34) in tRNA = 5-carboxymethoxyuridine(34) in tRNA + S-adenosyl-L-homocysteine + H(+). Catalyzes carboxymethyl transfer from carboxy-S-adenosyl-L-methionine (Cx-SAM) to 5-hydroxyuridine (ho5U) to form 5-carboxymethoxyuridine (cmo5U) at position 34 in tRNAs. The polypeptide is tRNA U34 carboxymethyltransferase (Escherichia coli O139:H28 (strain E24377A / ETEC)).